The primary structure comprises 158 residues: Transcription elongation factor GreA (158 aa).

Positions 49 to 69 (SEYESAKDEQAFVEGRISQIE) form a coiled coil. Positions 102-125 (EEPESYTIVGESESDPLSGKISNE) are disordered.

Belongs to the GreA/GreB family.

Functionally, necessary for efficient RNA polymerase transcription elongation past template-encoded arresting sites. The arresting sites in DNA have the property of trapping a certain fraction of elongating RNA polymerases that pass through, resulting in locked ternary complexes. Cleavage of the nascent transcript by cleavage factors such as GreA or GreB allows the resumption of elongation from the new 3'terminus. GreA releases sequences of 2 to 3 nucleotides. The sequence is that of Transcription elongation factor GreA from Limosilactobacillus fermentum (strain NBRC 3956 / LMG 18251) (Lactobacillus fermentum).